Consider the following 316-residue polypeptide: tRNA methyltransferase 10 homolog B (316 aa).

A coiled-coil region spans residues 73–97 (EKIVAAKKSKRKQEKERRKANRAEN). The tract at residues 77–98 (AAKKSKRKQEKERRKANRAENP) is disordered. In terms of domain architecture, SAM-dependent MTase TRM10-type spans 113–310 (TKDKLLEAKH…KGVSSGKGYI (198 aa)).

The protein belongs to the class IV-like SAM-binding methyltransferase superfamily. TRM10 family.

It catalyses the reaction guanosine(9) in tRNA + S-adenosyl-L-methionine = N(1)-methylguanosine(9) in tRNA + S-adenosyl-L-homocysteine + H(+). Functionally, S-adenosyl-L-methionine-dependent guanine N(1)-methyltransferase that catalyzes the formation of N(1)-methylguanine at position 9 (m1G9) in tRNAs. Probably not able to catalyze formation of N(1)-methyladenine at position 9 (m1A9) in tRNAs. The protein is tRNA methyltransferase 10 homolog B (TRMT10B) of Homo sapiens (Human).